The sequence spans 409 residues: G2/mitotic-specific cyclin-B (409 aa).

This sequence belongs to the cyclin family. Cyclin AB subfamily. In terms of assembly, interacts with the CDK1 protein kinase to form a serine/threonine kinase holoenzyme complex also known as maturation promoting factor (MPF). The cyclin subunit imparts substrate specificity to the complex.

Essential for the control of the cell cycle at the G2/M (mitosis) transition. The protein is G2/mitotic-specific cyclin-B of Arbacia punctulata (Punctuate sea urchin).